A 155-amino-acid chain; its full sequence is Cyanate hydratase (155 aa).

Catalysis depends on residues Arg95, Glu98, and Ser121.

This sequence belongs to the cyanase family.

It catalyses the reaction cyanate + hydrogencarbonate + 3 H(+) = NH4(+) + 2 CO2. Functionally, catalyzes the reaction of cyanate with bicarbonate to produce ammonia and carbon dioxide. In Pseudomonas syringae pv. tomato (strain ATCC BAA-871 / DC3000), this protein is Cyanate hydratase.